Reading from the N-terminus, the 47-residue chain is Putative beta-neurotoxin (47 aa).

The region spanning 1-47 is the LCN-type CS-alpha/beta domain; that stretch reads KEGYMGSDGCKMSCVINDQFCDTECQAKLKGSTGYCYFXGLACYXXG. Intrachain disulfides connect Cys14/Cys36 and Cys21/Cys43.

As to expression, expressed by the venom gland.

It localises to the secreted. Functionally, causes transient paralysis of the rear legs of and spasms in insects (A.domestica). The sequence is that of Putative beta-neurotoxin from Rhopalurus junceus (Caribbean blue scorpion).